Reading from the N-terminus, the 363-residue chain is MSGNTYGKLFTVTTAGESHGPALVAIVDGCPPGLEISLEDLQRDLDRRKPGTSRHTTQRQEADEVEILSGVFEGRTTGCSIGLLIRNTDQKSKDYSAIKDLFRPAHADYTYHHKYGERDYRGGGRSSARETAMRVAAGAIAKKYLASQGIVIRGYMSQLGPIEIPFKTWESVEQNAFFSPDPDKVPELEAYMDQLRRDQDSVGAKITVVAEGVMPGLGEPIFDRLDAELAHALMSINAVKGVEIGAGFACVAQRGTEHRDELTPEGFLSNNAGGILGGISSGQPIVAHLALKPTSSITTPGRSIDIDGNPVDVITKGRHDPCVGIRATPIAEAMMAIVLMDHLLRHRGQNADVRVSTPVLGQL.

Positions 48 and 54 each coordinate NADP(+). FMN-binding positions include 125-127 (RSS), 237-238 (NA), glycine 277, 292-296 (KPTSS), and arginine 318.

It belongs to the chorismate synthase family. As to quaternary structure, homotetramer. FMNH2 serves as cofactor.

It carries out the reaction 5-O-(1-carboxyvinyl)-3-phosphoshikimate = chorismate + phosphate. Its pathway is metabolic intermediate biosynthesis; chorismate biosynthesis; chorismate from D-erythrose 4-phosphate and phosphoenolpyruvate: step 7/7. In terms of biological role, catalyzes the anti-1,4-elimination of the C-3 phosphate and the C-6 proR hydrogen from 5-enolpyruvylshikimate-3-phosphate (EPSP) to yield chorismate, which is the branch point compound that serves as the starting substrate for the three terminal pathways of aromatic amino acid biosynthesis. This reaction introduces a second double bond into the aromatic ring system. This chain is Chorismate synthase, found in Pseudomonas fluorescens (strain Pf0-1).